The chain runs to 356 residues: Dihydroorotate dehydrogenase (quinone) (356 aa).

FMN is bound by residues 67-71 (AGFDK) and threonine 91. Lysine 71 contacts substrate. 116–120 (NRMGF) serves as a coordination point for substrate. 2 residues coordinate FMN: asparagine 153 and asparagine 186. Position 186 (asparagine 186) interacts with substrate. The Nucleophile role is filled by serine 189. Asparagine 191 is a binding site for substrate. Positions 228 and 256 each coordinate FMN. 257–258 (NT) provides a ligand contact to substrate. FMN-binding positions include glycine 282, glycine 311, and 332-333 (YT).

The protein belongs to the dihydroorotate dehydrogenase family. Type 2 subfamily. As to quaternary structure, monomer. The cofactor is FMN.

The protein localises to the cell membrane. The catalysed reaction is (S)-dihydroorotate + a quinone = orotate + a quinol. The protein operates within pyrimidine metabolism; UMP biosynthesis via de novo pathway; orotate from (S)-dihydroorotate (quinone route): step 1/1. In terms of biological role, catalyzes the conversion of dihydroorotate to orotate with quinone as electron acceptor. This is Dihydroorotate dehydrogenase (quinone) from Pseudarthrobacter chlorophenolicus (strain ATCC 700700 / DSM 12829 / CIP 107037 / JCM 12360 / KCTC 9906 / NCIMB 13794 / A6) (Arthrobacter chlorophenolicus).